Consider the following 186-residue polypeptide: Large ribosomal subunit protein uL5c (186 aa).

It belongs to the universal ribosomal protein uL5 family. As to quaternary structure, part of the 50S ribosomal subunit; contacts the 5S rRNA.

It is found in the plastid. It localises to the chloroplast. In terms of biological role, binds 5S rRNA, forms part of the central protuberance of the 50S subunit. The polypeptide is Large ribosomal subunit protein uL5c (rpl5) (Chaetosphaeridium globosum (Charophycean green alga)).